A 287-amino-acid chain; its full sequence is MPKINTSSSGWLADISLFYERRGTNTKLVHREQVGPLMVQRPFYPETGVAHTYLLHPPGGVVGGDQLNINIHVSPQAHSLLTTPGATKFYRSSGAISSQTQNLTVESDGFLEWLPQENIFFPDSQAQLKTQVELHKDAHFIGWEMNCFGRPVLNEIFENGFVTGRTNIKVDDQLLLSESMYIDSIDEIKHAAGMRHYPMLGNLYIYPASEALEEKLRTLIDENFHEQPELFGSSNPICGITEIDGLLVIRYLGHQTEPMMACFSTLWQHTRQHWLGKLPEVPRIWAT.

It belongs to the UreD family. In terms of assembly, ureD, UreF and UreG form a complex that acts as a GTP-hydrolysis-dependent molecular chaperone, activating the urease apoprotein by helping to assemble the nickel containing metallocenter of UreC. The UreE protein probably delivers the nickel.

Its subcellular location is the cytoplasm. Required for maturation of urease via the functional incorporation of the urease nickel metallocenter. This chain is Urease accessory protein UreD, found in Aliivibrio fischeri (strain MJ11) (Vibrio fischeri).